A 311-amino-acid polypeptide reads, in one-letter code: Aspartate carbamoyltransferase catalytic subunit (311 aa).

Positions 58 and 59 each coordinate carbamoyl phosphate. K86 contacts L-aspartate. Residues R108, H136, and Q139 each contribute to the carbamoyl phosphate site. L-aspartate is bound by residues R169 and R223. Carbamoyl phosphate is bound by residues G264 and P265.

The protein belongs to the aspartate/ornithine carbamoyltransferase superfamily. ATCase family. In terms of assembly, heterododecamer (2C3:3R2) of six catalytic PyrB chains organized as two trimers (C3), and six regulatory PyrI chains organized as three dimers (R2).

It carries out the reaction carbamoyl phosphate + L-aspartate = N-carbamoyl-L-aspartate + phosphate + H(+). Its pathway is pyrimidine metabolism; UMP biosynthesis via de novo pathway; (S)-dihydroorotate from bicarbonate: step 2/3. In terms of biological role, catalyzes the condensation of carbamoyl phosphate and aspartate to form carbamoyl aspartate and inorganic phosphate, the committed step in the de novo pyrimidine nucleotide biosynthesis pathway. The sequence is that of Aspartate carbamoyltransferase catalytic subunit from Ruegeria pomeroyi (strain ATCC 700808 / DSM 15171 / DSS-3) (Silicibacter pomeroyi).